Reading from the N-terminus, the 262-residue chain is Alpha/beta-gliadin A-I (262 aa).

The N-terminal stretch at Met-1–Ala-20 is a signal peptide. Disordered stretches follow at residues Leu-51–Gln-73, Pro-87–Gln-120, and Tyr-225–Pro-251. Composition is skewed to pro residues over residues Pro-56–Ser-71 and Pro-93–Gln-104. Low complexity predominate over residues Pro-105–Gln-120. A compositionally biased stretch (polar residues) spans Phe-232–Pro-251.

The protein belongs to the gliadin/glutenin family. Substrate of transglutaminase.

In terms of biological role, gliadin is the major seed storage protein in wheat. The polypeptide is Alpha/beta-gliadin A-I (Triticum aestivum (Wheat)).